Consider the following 201-residue polypeptide: uncharacterized protein (201 aa).

The signal sequence occupies residues 1–19 (MKLIVSVFLIGCQFLNILG).

This is an uncharacterized protein from Acheta domesticus (House cricket).